The sequence spans 69 residues: uncharacterized protein (69 aa).

Positions 10-64 constitute an HTH cro/C1-type domain; the sequence is IRAFRKLKGYTQEGFAKALGISVSILGEIERGNRLPSAAIIQDAADVLNISADEL. A DNA-binding region (H-T-H motif) is located at residues 21–40; the sequence is QEGFAKALGISVSILGEIER.

This is an uncharacterized protein from Bacillus subtilis (strain 168).